The primary structure comprises 89 residues: Small ribosomal subunit protein uS15 (89 aa).

The protein belongs to the universal ribosomal protein uS15 family. In terms of assembly, part of the 30S ribosomal subunit. Forms a bridge to the 50S subunit in the 70S ribosome, contacting the 23S rRNA.

Functionally, one of the primary rRNA binding proteins, it binds directly to 16S rRNA where it helps nucleate assembly of the platform of the 30S subunit by binding and bridging several RNA helices of the 16S rRNA. Its function is as follows. Forms an intersubunit bridge (bridge B4) with the 23S rRNA of the 50S subunit in the ribosome. In Lactiplantibacillus plantarum (strain ATCC BAA-793 / NCIMB 8826 / WCFS1) (Lactobacillus plantarum), this protein is Small ribosomal subunit protein uS15.